The sequence spans 311 residues: Aspartate carbamoyltransferase catalytic subunit (311 aa).

2 residues coordinate carbamoyl phosphate: Arg-55 and Thr-56. Residue Lys-83 coordinates L-aspartate. 3 residues coordinate carbamoyl phosphate: Arg-105, His-134, and Gln-137. L-aspartate-binding residues include Arg-167 and Arg-226. Residues Gly-267 and Pro-268 each coordinate carbamoyl phosphate.

It belongs to the aspartate/ornithine carbamoyltransferase superfamily. ATCase family. In terms of assembly, heterododecamer (2C3:3R2) of six catalytic PyrB chains organized as two trimers (C3), and six regulatory PyrI chains organized as three dimers (R2).

The enzyme catalyses carbamoyl phosphate + L-aspartate = N-carbamoyl-L-aspartate + phosphate + H(+). The protein operates within pyrimidine metabolism; UMP biosynthesis via de novo pathway; (S)-dihydroorotate from bicarbonate: step 2/3. Catalyzes the condensation of carbamoyl phosphate and aspartate to form carbamoyl aspartate and inorganic phosphate, the committed step in the de novo pyrimidine nucleotide biosynthesis pathway. This chain is Aspartate carbamoyltransferase catalytic subunit, found in Corynebacterium jeikeium (strain K411).